We begin with the raw amino-acid sequence, 827 residues long: Carnosine synthase 1 (827 aa).

The ATP-grasp domain occupies 516–720 (GPPWPAPSLH…LLLAAVMVAC (205 aa)). 542–611 (VHQVPLPGVM…MEFVEGTEHD (70 aa)) contributes to the ATP binding site. E677, E689, and N691 together coordinate Mg(2+). E677, E689, and N691 together coordinate Mn(2+).

As to quaternary structure, homotetramer. Mg(2+) serves as cofactor. Requires Mn(2+) as cofactor.

The catalysed reaction is beta-alanine + L-histidine + ATP = carnosine + ADP + phosphate + H(+). It carries out the reaction 4-aminobutanoate + L-histidine + ATP = L-homocarnosine + ADP + phosphate + H(+). Catalyzes the synthesis of carnosine and homocarnosine. Carnosine is synthesized more efficiently than homocarnosine. The protein is Carnosine synthase 1 of Homo sapiens (Human).